A 383-amino-acid polypeptide reads, in one-letter code: Omega-6 fatty acid desaturase, endoplasmic reticulum isozyme 2 (383 aa).

3 helical membrane passes run Thr61–Leu81, Gly85–His105, and Leu117–Trp137. Residues His105–His109 carry the Histidine box-1 motif. The Histidine box-2 signature appears at His141–His145. Transmembrane regions (helical) follow at residues Val179–Ser199, Ile225–Ala245, and Ala249–Ile269. Positions His315–His319 match the Histidine box-3 motif.

Belongs to the fatty acid desaturase type 1 family.

The protein localises to the endoplasmic reticulum membrane. It participates in lipid metabolism; polyunsaturated fatty acid biosynthesis. Its function is as follows. ER (microsomal) omega-6 fatty acid desaturase introduces the second double bond in the biosynthesis of 18:3 fatty acids, important constituents of plant membranes. It is thought to use cytochrome b5 as an electron donor and to act on fatty acids esterified to phosphatidylcholine and, possibly, other phospholipids. This chain is Omega-6 fatty acid desaturase, endoplasmic reticulum isozyme 2 (FAD2-2), found in Glycine max (Soybean).